Here is a 521-residue protein sequence, read N- to C-terminus: GMP synthase [glutamine-hydrolyzing] (521 aa).

The Glutamine amidotransferase type-1 domain maps to lysine 5–aspartate 203. The Nucleophile role is filled by cysteine 82. Catalysis depends on residues histidine 177 and glutamate 179. The region spanning tryptophan 204 to arginine 396 is the GMPS ATP-PPase domain. Serine 231–serine 237 serves as a coordination point for ATP.

In terms of assembly, homodimer.

It catalyses the reaction XMP + L-glutamine + ATP + H2O = GMP + L-glutamate + AMP + diphosphate + 2 H(+). The protein operates within purine metabolism; GMP biosynthesis; GMP from XMP (L-Gln route): step 1/1. Catalyzes the synthesis of GMP from XMP. The sequence is that of GMP synthase [glutamine-hydrolyzing] from Azoarcus sp. (strain BH72).